The sequence spans 408 residues: Phosphoglycerate kinase (408 aa).

Substrate contacts are provided by residues 22–24 (DIN), Arg-39, 60–63 (HQSR), Arg-117, and Arg-157. ATP contacts are provided by residues Glu-332 and 358 to 361 (GGHT).

The protein belongs to the phosphoglycerate kinase family. As to quaternary structure, monomer.

It localises to the cytoplasm. The catalysed reaction is (2R)-3-phosphoglycerate + ATP = (2R)-3-phospho-glyceroyl phosphate + ADP. The protein operates within carbohydrate degradation; glycolysis; pyruvate from D-glyceraldehyde 3-phosphate: step 2/5. In Thermoplasma volcanium (strain ATCC 51530 / DSM 4299 / JCM 9571 / NBRC 15438 / GSS1), this protein is Phosphoglycerate kinase.